A 187-amino-acid polypeptide reads, in one-letter code: Elongation factor P (187 aa).

This sequence belongs to the elongation factor P family.

It localises to the cytoplasm. It functions in the pathway protein biosynthesis; polypeptide chain elongation. Involved in peptide bond synthesis. Stimulates efficient translation and peptide-bond synthesis on native or reconstituted 70S ribosomes in vitro. Probably functions indirectly by altering the affinity of the ribosome for aminoacyl-tRNA, thus increasing their reactivity as acceptors for peptidyl transferase. The polypeptide is Elongation factor P (Parasynechococcus marenigrum (strain WH8102)).